A 922-amino-acid polypeptide reads, in one-letter code: GPI inositol-deacylase (922 aa).

Residues 1 to 11 (MFLHSVNLWNL) lie on the Cytoplasmic side of the membrane. The chain crosses the membrane as a helical span at residues 12–32 (AFYVFMVFLATLGLWDVFFGF). Topologically, residues 33-597 (EENKCSMSYM…GQVVRFHGGA (565 aa)) are lumenal. Ser-174 is a catalytic residue. 3 N-linked (GlcNAc...) asparagine glycosylation sites follow: Asn-363, Asn-402, and Asn-558. Residues 598-618 (LPAYVVSSILLAYGGQLYSLL) form a helical membrane-spanning segment. Topologically, residues 619–641 (STGYCLEYSTILDKEAKPYKVDP) are cytoplasmic. A helical membrane pass occupies residues 642 to 662 (FVIMIKFLLGYKWFKELWDAV). Over 663-668 (LLPELD) the chain is Lumenal. Residues 669-689 (AIVLTSQSMCFPLVSLILFLF) form a helical membrane-spanning segment. Topologically, residues 690–694 (GTCTA) are cytoplasmic. The chain crosses the membrane as a helical span at residues 695–715 (YWSGLLSSTSVQLLSSLWLAL). Residues 716 to 733 (KRPAELPKDIKVMSPDLP) are Lumenal-facing. Residues 734-754 (VLTVVFLIVSWTTCGALAILL) form a helical membrane-spanning segment. Topologically, residues 755 to 817 (SYLYYVFKVV…DAEDSLRMHS (63 aa)) are cytoplasmic. A disordered region spans residues 776-798 (NQPVNPKHSRRSEKKSNHHKDSA). Residues 782-793 (KHSRRSEKKSNH) show a composition bias toward basic residues. Residues 818–838 (TVINLLTWVVLLSMPSLIYWL) form a helical membrane-spanning segment. At 839-894 (KNLRYYFKLSPDPCKPLAFLLIPAIAILGNTHTVSVKSSKLLKTVSQFPLPLAVGV) the chain is on the lumenal side. A helical transmembrane segment spans residues 895 to 915 (IAFGSSHLYRVPCFVIIPLVF). The Cytoplasmic segment spans residues 916 to 922 (HALCNFM).

It belongs to the GPI inositol-deacylase family.

The protein resides in the endoplasmic reticulum membrane. Its function is as follows. GPI inositol-deacylase that catalyzes the remove of the acyl chain linked to the 2-OH position of inositol ring from the GPI-anchored protein (GPI-AP) in the endoplasmic reticulum. Initiates the post-attachment remodeling phase of GPI-AP biogenesis and participates in endoplasmic reticulum (ER)-to-Golgi transport of GPI-anchored protein. This Mus musculus (Mouse) protein is GPI inositol-deacylase.